The following is a 477-amino-acid chain: Endoglucanase A (477 aa).

The N-terminal stretch at 1-32 is a signal peptide; it reads MKNVKKRVGVVLLILAVLGVYMLAMPANTVSA. Glu95 serves as the catalytic Proton donor. Asp152 (nucleophile) is an active-site residue. Residues 411 to 477 enclose the Dockerin domain; sequence PQVVYGDVNG…LIKSIPHLPY (67 aa).

The protein belongs to the glycosyl hydrolase 8 (cellulase D) family.

The enzyme catalyses Endohydrolysis of (1-&gt;4)-beta-D-glucosidic linkages in cellulose, lichenin and cereal beta-D-glucans.. Its function is as follows. This enzyme catalyzes the endohydrolysis of 1,4-beta-glucosidic linkages in cellulose, lichenin and cereal beta-D-glucans. The chain is Endoglucanase A (celA) from Acetivibrio thermocellus (strain ATCC 27405 / DSM 1237 / JCM 9322 / NBRC 103400 / NCIMB 10682 / NRRL B-4536 / VPI 7372) (Clostridium thermocellum).